A 401-amino-acid chain; its full sequence is Phosphoglycerate kinase (401 aa).

Residues 23–25 (DFN), arginine 39, 62–65 (HLGR), arginine 121, and arginine 154 each bind substrate. Residues lysine 207, glycine 298, glutamate 329, and 355–358 (GGDT) each bind ATP.

It belongs to the phosphoglycerate kinase family. In terms of assembly, monomer.

Its subcellular location is the cytoplasm. The enzyme catalyses (2R)-3-phosphoglycerate + ATP = (2R)-3-phospho-glyceroyl phosphate + ADP. It functions in the pathway carbohydrate degradation; glycolysis; pyruvate from D-glyceraldehyde 3-phosphate: step 2/5. The polypeptide is Phosphoglycerate kinase (Campylobacter fetus subsp. fetus (strain 82-40)).